The following is a 297-amino-acid chain: Light-independent protochlorophyllide reductase iron-sulfur ATP-binding protein (297 aa).

Residues 41 to 46 and Lys70 each bind ATP; that span reads GIGKST. Residue Ser45 coordinates Mg(2+). Residues Cys126 and Cys160 each contribute to the [4Fe-4S] cluster site. ATP-binding positions include 211 to 212 and 235 to 237; these read NR and PDL.

The protein belongs to the NifH/BchL/ChlL family. As to quaternary structure, homodimer. Protochlorophyllide reductase is composed of three subunits; BchL, BchN and BchB. It depends on [4Fe-4S] cluster as a cofactor.

It catalyses the reaction chlorophyllide a + oxidized 2[4Fe-4S]-[ferredoxin] + 2 ADP + 2 phosphate = protochlorophyllide a + reduced 2[4Fe-4S]-[ferredoxin] + 2 ATP + 2 H2O. It participates in porphyrin-containing compound metabolism; bacteriochlorophyll biosynthesis (light-independent). Its function is as follows. Component of the dark-operative protochlorophyllide reductase (DPOR) that uses Mg-ATP and reduced ferredoxin to reduce ring D of protochlorophyllide (Pchlide) to form chlorophyllide a (Chlide). This reaction is light-independent. The L component serves as a unique electron donor to the NB-component of the complex, and binds Mg-ATP. The sequence is that of Light-independent protochlorophyllide reductase iron-sulfur ATP-binding protein from Cereibacter sphaeroides (strain ATCC 17025 / ATH 2.4.3) (Rhodobacter sphaeroides).